We begin with the raw amino-acid sequence, 233 residues long: tRNA (guanine-N(7)-)-methyltransferase (233 aa).

Residues 1 to 22 form a disordered region; sequence MIDENHPMRAAGNFFGRRHGKP. S-adenosyl-L-methionine is bound by residues Glu64, Glu89, Asp116, and Asp138. Residue Asp138 is part of the active site. Substrate-binding positions include Lys142, Asp174, and 212-215; that span reads TRYE.

It belongs to the class I-like SAM-binding methyltransferase superfamily. TrmB family.

The enzyme catalyses guanosine(46) in tRNA + S-adenosyl-L-methionine = N(7)-methylguanosine(46) in tRNA + S-adenosyl-L-homocysteine. Its pathway is tRNA modification; N(7)-methylguanine-tRNA biosynthesis. Catalyzes the formation of N(7)-methylguanine at position 46 (m7G46) in tRNA. The protein is tRNA (guanine-N(7)-)-methyltransferase of Brucella abortus (strain 2308).